Consider the following 438-residue polypeptide: Glutamyl-tRNA reductase (438 aa).

Substrate is bound by residues 49-52 (TCNR), serine 109, 114-116 (EGQ), and glutamine 120. Cysteine 50 functions as the Nucleophile in the catalytic mechanism. Position 197 to 202 (197 to 202 (GAGKMS)) interacts with NADP(+).

It belongs to the glutamyl-tRNA reductase family. In terms of assembly, homodimer.

It catalyses the reaction (S)-4-amino-5-oxopentanoate + tRNA(Glu) + NADP(+) = L-glutamyl-tRNA(Glu) + NADPH + H(+). It participates in porphyrin-containing compound metabolism; protoporphyrin-IX biosynthesis; 5-aminolevulinate from L-glutamyl-tRNA(Glu): step 1/2. Its pathway is porphyrin-containing compound metabolism; chlorophyll biosynthesis. Functionally, catalyzes the NADPH-dependent reduction of glutamyl-tRNA(Glu) to glutamate 1-semialdehyde (GSA). This is Glutamyl-tRNA reductase from Synechococcus elongatus (strain ATCC 33912 / PCC 7942 / FACHB-805) (Anacystis nidulans R2).